A 134-amino-acid chain; its full sequence is MSWQGYVDDHLMCDIEGHEGHRLTAAAIVGHDGSVWAQSATFPQFKPEEMNGIMTDFNEPGHLAPTGLHLGGTKYMVIQGEAGAVIRGKKGSGGITIKKTGQALVFGIYEEPVTPGQCNMVVERLGDYLLEQGL.

A disulfide bond links C13 and C118. The short motif at A84 to T100 is the Involved in PIP2 interaction element. T114 is subject to Phosphothreonine.

It belongs to the profilin family. In terms of assembly, occurs in many kinds of cells as a complex with monomeric actin in a 1:1 ratio. Phosphorylated by MAP kinases.

It is found in the cytoplasm. It localises to the cytoskeleton. In terms of biological role, binds to actin and affects the structure of the cytoskeleton. At high concentrations, profilin prevents the polymerization of actin, whereas it enhances it at low concentrations. The polypeptide is Profilin-3 (Olea europaea (Common olive)).